We begin with the raw amino-acid sequence, 453 residues long: Bifunctional protein GlmU (453 aa).

The interval 1 to 225 (MNIVILAAGT…EWETLGVNSK (225 aa)) is pyrophosphorylase. UDP-N-acetyl-alpha-D-glucosamine contacts are provided by residues 6–9 (LAAG), K20, Q71, 76–77 (GT), 98–100 (YGD), G135, E150, N165, and N223. D100 is a Mg(2+) binding site. N223 contributes to the Mg(2+) binding site. Residues 226 to 246 (AQLAELERIHQRNVADALLAD) are linker. The N-acetyltransferase stretch occupies residues 247–453 (GVTLADPARI…GYVRPVKKKS (207 aa)). 2 residues coordinate UDP-N-acetyl-alpha-D-glucosamine: R329 and K347. H359 functions as the Proton acceptor in the catalytic mechanism. Residues Y362 and N373 each contribute to the UDP-N-acetyl-alpha-D-glucosamine site. Residues A376, 382–383 (NY), S401, and A419 each bind acetyl-CoA.

The protein in the N-terminal section; belongs to the N-acetylglucosamine-1-phosphate uridyltransferase family. It in the C-terminal section; belongs to the transferase hexapeptide repeat family. In terms of assembly, homotrimer. Requires Mg(2+) as cofactor.

Its subcellular location is the cytoplasm. The catalysed reaction is alpha-D-glucosamine 1-phosphate + acetyl-CoA = N-acetyl-alpha-D-glucosamine 1-phosphate + CoA + H(+). The enzyme catalyses N-acetyl-alpha-D-glucosamine 1-phosphate + UTP + H(+) = UDP-N-acetyl-alpha-D-glucosamine + diphosphate. The protein operates within nucleotide-sugar biosynthesis; UDP-N-acetyl-alpha-D-glucosamine biosynthesis; N-acetyl-alpha-D-glucosamine 1-phosphate from alpha-D-glucosamine 6-phosphate (route II): step 2/2. It functions in the pathway nucleotide-sugar biosynthesis; UDP-N-acetyl-alpha-D-glucosamine biosynthesis; UDP-N-acetyl-alpha-D-glucosamine from N-acetyl-alpha-D-glucosamine 1-phosphate: step 1/1. Its pathway is bacterial outer membrane biogenesis; LPS lipid A biosynthesis. Catalyzes the last two sequential reactions in the de novo biosynthetic pathway for UDP-N-acetylglucosamine (UDP-GlcNAc). The C-terminal domain catalyzes the transfer of acetyl group from acetyl coenzyme A to glucosamine-1-phosphate (GlcN-1-P) to produce N-acetylglucosamine-1-phosphate (GlcNAc-1-P), which is converted into UDP-GlcNAc by the transfer of uridine 5-monophosphate (from uridine 5-triphosphate), a reaction catalyzed by the N-terminal domain. This chain is Bifunctional protein GlmU, found in Burkholderia multivorans (strain ATCC 17616 / 249).